Reading from the N-terminus, the 1372-residue chain is DNA-directed RNA polymerase subunit beta' (1372 aa).

Zn(2+)-binding residues include Cys69, Cys71, Cys84, and Cys87. Asp460, Asp462, and Asp464 together coordinate Mg(2+). Residues Cys808, Cys882, Cys889, and Cys892 each coordinate Zn(2+).

It belongs to the RNA polymerase beta' chain family. As to quaternary structure, the RNAP catalytic core consists of 2 alpha, 1 beta, 1 beta' and 1 omega subunit. When a sigma factor is associated with the core the holoenzyme is formed, which can initiate transcription. It depends on Mg(2+) as a cofactor. Requires Zn(2+) as cofactor.

The catalysed reaction is RNA(n) + a ribonucleoside 5'-triphosphate = RNA(n+1) + diphosphate. DNA-dependent RNA polymerase catalyzes the transcription of DNA into RNA using the four ribonucleoside triphosphates as substrates. The protein is DNA-directed RNA polymerase subunit beta' of Rickettsia conorii (strain ATCC VR-613 / Malish 7).